Reading from the N-terminus, the 188-residue chain is Proline-rich protein 3 (188 aa).

The interval 1-157 (MPKRKKQNHH…DPQVMEDKSD (157 aa)) is disordered. Pro residues-rich tracts occupy residues 35-46 (IGPPSLLGPPPM) and 69-82 (LIPP…PPWG). Positions 83–96 (RGPIRRGLGPRSSP) are enriched in low complexity. Positions 145 to 157 (PKDDPQVMEDKSD) are enriched in basic and acidic residues. The segment at 155–183 (KSDRPVCRHFAKKGHCRYEDLCAFYHPGV) adopts a C3H1-type zinc-finger fold.

The polypeptide is Proline-rich protein 3 (PRR3) (Homo sapiens (Human)).